The chain runs to 961 residues: Ras-interacting protein 1 (961 aa).

The span at 1-10 (MLSGERKEGG) shows a compositional bias: basic and acidic residues. Disordered stretches follow at residues 1-21 (MLSG…HLPV), 35-70 (LGRR…PHVE), and 96-116 (RGSG…QRWA). Residues 41–57 (SAASVKSSSSDTGSRSS) show a composition bias toward low complexity. Residues 59-68 (PLPPPPPPPH) show a composition bias toward pro residues. Residue Arg96 is modified to Omega-N-methylarginine. Over residues 98–110 (SGAGGAGGPGTPG) the composition is skewed to gly residues. Residues 141–253 (PPGVLKIFAS…RRFELRGREE (113 aa)) form the Ras-associating domain. The segment at 261-352 (AFGAADADGT…MAPGAADAQM (92 aa)) is disordered. Phosphoserine is present on residues Ser274 and Ser286. The segment covering 284–295 (AASGGAALASPG) has biased composition (low complexity). A compositionally biased stretch (gly residues) spans 296–307 (PGSGSGTPTGSG). The span at 314 to 327 (NLSLRRSVSELSLQ) shows a compositional bias: low complexity. Phosphoserine is present on residues Ser320, Ser322, Ser325, and Ser413. The region spanning 594–895 (GRLARLIKEA…PPAERDAVDT (302 aa)) is the Dilute domain.

As to quaternary structure, interacts with Ras family members that have been activated by GTP binding. Interacts with HRAS, RAP1A, RAP2, RRAS, RAF1 and RRAS2. Interacts with MYH9 and ARHGAP29. As to expression, detected in kidney, heart, skeletal muscle, small intestine and lung.

It localises to the cytoplasm. It is found in the perinuclear region. The protein resides in the golgi apparatus. The protein localises to the golgi stack. Functionally, required for the proper formation of vascular structures that develop via both vasculogenesis and angiogenesis. Acts as a critical and vascular-specific regulator of GTPase signaling, cell architecture, and adhesion, which is essential for endothelial cell morphogenesis and blood vessel tubulogenesis. Regulates the activity of Rho GTPases in part by recruiting ARHGAP29 and suppressing RhoA signaling and dampening ROCK and MYH9 activities in endothelial cells. May act as effector for Golgi-bound HRAS and other Ras-like proteins. May promote HRAS-mediated transformation. Negative regulator of amino acid starvation-induced autophagy. In Mus musculus (Mouse), this protein is Ras-interacting protein 1 (Rasip1).